The sequence spans 162 residues: Protein-export protein SecB (162 aa).

The protein belongs to the SecB family. In terms of assembly, homotetramer, a dimer of dimers. One homotetramer interacts with 1 SecA dimer.

It localises to the cytoplasm. Functionally, one of the proteins required for the normal export of preproteins out of the cell cytoplasm. It is a molecular chaperone that binds to a subset of precursor proteins, maintaining them in a translocation-competent state. It also specifically binds to its receptor SecA. This Pseudomonas syringae pv. syringae (strain B728a) protein is Protein-export protein SecB.